A 229-amino-acid polypeptide reads, in one-letter code: NAD-dependent protein deacylase (229 aa).

Residues 1–227 enclose the Deacetylase sirtuin-type domain; it reads MKNLVILSGA…QDLMPKLIEM (227 aa). 9 to 28 contributes to the NAD(+) binding site; it reads GAGISAESGIKTFRDADGLW. Positions 53 and 56 each coordinate substrate. Residue 86 to 89 participates in NAD(+) binding; that stretch reads QNVD. The Proton acceptor role is filled by histidine 104. 169 to 171 serves as a coordination point for NAD(+); the sequence is GTS.

Belongs to the sirtuin family. Class III subfamily.

The protein localises to the cytoplasm. It carries out the reaction N(6)-acetyl-L-lysyl-[protein] + NAD(+) + H2O = 2''-O-acetyl-ADP-D-ribose + nicotinamide + L-lysyl-[protein]. It catalyses the reaction N(6)-succinyl-L-lysyl-[protein] + NAD(+) + H2O = 2''-O-succinyl-ADP-D-ribose + nicotinamide + L-lysyl-[protein]. Its function is as follows. NAD-dependent lysine deacetylase and desuccinylase that specifically removes acetyl and succinyl groups on target proteins. Modulates the activities of several proteins which are inactive in their acylated form. This chain is NAD-dependent protein deacylase, found in Helicobacter pylori (strain ATCC 700392 / 26695) (Campylobacter pylori).